The chain runs to 187 residues: UPF0301 protein HSM_1900 (187 aa).

This sequence belongs to the UPF0301 (AlgH) family.

This Histophilus somni (strain 2336) (Haemophilus somnus) protein is UPF0301 protein HSM_1900.